We begin with the raw amino-acid sequence, 336 residues long: Alcohol dehydrogenase, propanol-preferring (336 aa).

Residues cysteine 37, histidine 58, cysteine 89, cysteine 92, cysteine 95, cysteine 103, and cysteine 145 each contribute to the Zn(2+) site.

This sequence belongs to the zinc-containing alcohol dehydrogenase family. Zn(2+) serves as cofactor.

It carries out the reaction a primary alcohol + NAD(+) = an aldehyde + NADH + H(+). The enzyme catalyses a secondary alcohol + NAD(+) = a ketone + NADH + H(+). Functionally, preferred specificity is towards 1-propanol. The polypeptide is Alcohol dehydrogenase, propanol-preferring (adhP) (Escherichia coli (strain K12)).